Here is a 73-residue protein sequence, read N- to C-terminus: Defensin-like protein 10 (73 aa).

An N-terminal signal peptide occupies residues 1-28 (MKLSLRLISALLMSVMLLFATGMGPVEA). 4 disulfides stabilise this stretch: C31-C73, C42-C62, C48-C67, and C52-C69.

Belongs to the DEFL family.

The protein resides in the secreted. Confers broad-spectrum resistance to pathogens. This chain is Defensin-like protein 10 (PDF2.6), found in Arabidopsis thaliana (Mouse-ear cress).